Consider the following 299-residue polypeptide: Hydrogenase maturation factor HypB (299 aa).

Positions 2, 5, and 7 each coordinate Ni(2+). The interval 18–57 (EVGDDGHGHHHHDGHHDHDHDHDHHRGDHEHDDHHHAEDG) is disordered. The segment covering 31 to 57 (GHHDHDHDHDHHRGDHEHDDHHHAEDG) has biased composition (basic and acidic residues). Residues 107 to 268 (ALNFVSSPGS…LRVNPRLQTL (162 aa)) are G-domain. The Ni(2+) site is built by cysteine 167, histidine 168, and cysteine 199. Zn(2+) is bound by residues cysteine 167, histidine 168, and cysteine 199.

Belongs to the SIMIBI class G3E GTPase family. HypB/HupM subfamily.

Involved in the maturation of [NiFe] hydrogenases. Required for nickel insertion into the metal center of the hydrogenase. Exhibits a low intrinsic GTPase activity, which is essential for nickel insertion. Is able to bind 4 nickel ions per subunit. Can also bind zinc. The polypeptide is Hydrogenase maturation factor HypB (Rhizobium leguminosarum bv. viciae).